Here is a 186-residue protein sequence, read N- to C-terminus: MKYIEVDEELYRHIASKTEHIGESASDILRRILGLQVESVVQDAPEEISHPSLERVSPKPVKVAKVITKMTSTAVSDFTSLIDADVLAAQKGAVGRFLFILDTVHRASPVQFEQVLQIQGRDRLYFATSKDALLKASKSANPKEIGQSGFWVTTNNNTAKKRTILSEVLLQFGTDEAQVTDIIEKI.

The interaction with DNA stretch occupies residues 93–94 (AV).

This sequence belongs to the SeqA family. As to quaternary structure, homodimer. Polymerizes to form helical filaments.

The protein localises to the cytoplasm. In terms of biological role, negative regulator of replication initiation, which contributes to regulation of DNA replication and ensures that replication initiation occurs exactly once per chromosome per cell cycle. Binds to pairs of hemimethylated GATC sequences in the oriC region, thus preventing assembly of replication proteins and re-initiation at newly replicated origins. Repression is relieved when the region becomes fully methylated. This is Negative modulator of initiation of replication from Shewanella halifaxensis (strain HAW-EB4).